The primary structure comprises 416 residues: Geranyl diphosphate synthase (416 aa).

2 residues coordinate Mg(2+): aspartate 157 and aspartate 161. The DDXXD motif signature appears at 157–161 (DDIMD).

It belongs to the FPP/GGPP synthase family. Mg(2+) is required as a cofactor. In terms of tissue distribution, specifically expressed in the anterior midgut of male beetles, the site of aggregation pheromone biosynthesis.

The enzyme catalyses isopentenyl diphosphate + dimethylallyl diphosphate = (2E)-geranyl diphosphate + diphosphate. It functions in the pathway pheromone biosynthesis. In terms of biological role, geranyl diphosphate synthase involved in pheromone biosynthesis. The sequence is that of Geranyl diphosphate synthase from Ips pini (Pine engraver beetle).